Reading from the N-terminus, the 173-residue chain is Shikimate kinase 1 (173 aa).

Residue 14-19 (GAGKST) participates in ATP binding. Residue Ser-18 coordinates Mg(2+). The substrate site is built by Asp-36, Arg-60, and Gly-82. Arg-120 is an ATP binding site. Arg-140 lines the substrate pocket.

The protein belongs to the shikimate kinase family. As to quaternary structure, monomer. The cofactor is Mg(2+).

The protein localises to the cytoplasm. It catalyses the reaction shikimate + ATP = 3-phosphoshikimate + ADP + H(+). Its pathway is metabolic intermediate biosynthesis; chorismate biosynthesis; chorismate from D-erythrose 4-phosphate and phosphoenolpyruvate: step 5/7. In terms of biological role, catalyzes the specific phosphorylation of the 3-hydroxyl group of shikimic acid using ATP as a cosubstrate. The chain is Shikimate kinase 1 from Hamiltonella defensa subsp. Acyrthosiphon pisum (strain 5AT).